The chain runs to 600 residues: Pyranose dehydrogenase (600 aa).

Positions 1-25 are cleaved as a signal peptide; the sequence is MFPRVVRLNSRLVSFALLGLQIANG. Asn99 and Asn114 each carry an N-linked (GlcNAc...) asparagine glycan. His127 is subject to Tele-8alpha-FAD histidine. Asn199, Asn275, Asn342, Asn399, and Asn507 each carry an N-linked (GlcNAc...) asparagine glycan. His535 functions as the Proton acceptor in the catalytic mechanism. N-linked (GlcNAc...) asparagine glycosylation is present at Asn546. His579 is a catalytic residue.

It belongs to the GMC oxidoreductase family. Monomer. The cofactor is FAD. Post-translationally, N-glycosylated.

The protein resides in the secreted. The catalysed reaction is pyranose + acceptor = pyranos-2-ulose + reduced acceptor.. It carries out the reaction pyranose + acceptor = pyranos-3-ulose + reduced acceptor.. It catalyses the reaction pyranose + acceptor = pyranos-2,3-diulose + reduced acceptor.. The enzyme catalyses a pyranoside + acceptor = a pyranosid-3-ulose + reduced acceptor.. The catalysed reaction is a pyranoside + acceptor = a pyranosid-3,4-diulose + reduced acceptor.. Catalyzes the single-oxidation or sequential double oxidation reaction of carbohydrates primarily at carbon-2 and/or carbon-3 with the concomitant reduction of the flavin. The enzyme exhibits a broad sugar substrate specificity, oxidizing different aldopyranoses to the corresponding C-1, C-2, C-3 or C-1,2, C-2,3 and C-3,4 (di)dehydro sugars with substrate-specific regioselectivity. Accepts only a narrow range of electron acceptors such as substituted benzoquinones and complexed metal ions and reacts extremely slowly with O(2) as acceptor. May play a role in the natural recycling of plant matter by oxidizing all major monosaccharides in lignocellulose and by reducing quinone compounds or reactive radical species generated during lignin depolymerization. In Agaricus xanthodermus (Poison yellow meadow mushroom), this protein is Pyranose dehydrogenase.